Here is a 167-residue protein sequence, read N- to C-terminus: uncharacterized protein (167 aa).

It localises to the mitochondrion. This is an uncharacterized protein from Marchantia polymorpha (Common liverwort).